The following is a 131-amino-acid chain: Large ribosomal subunit protein uL14m (131 aa).

It belongs to the universal ribosomal protein uL14 family. In terms of assembly, component of the mitochondrial large ribosomal subunit (mt-LSU). Mature N.crassa 74S mitochondrial ribosomes consist of a small (37S) and a large (54S) subunit. The 37S small subunit contains a 16S ribosomal RNA (16S mt-rRNA) and 32 different proteins. The 54S large subunit contains a 23S rRNA (23S mt-rRNA) and 42 different proteins.

Its subcellular location is the mitochondrion. Functionally, component of the mitochondrial ribosome (mitoribosome), a dedicated translation machinery responsible for the synthesis of mitochondrial genome-encoded proteins, including at least some of the essential transmembrane subunits of the mitochondrial respiratory chain. The mitoribosomes are attached to the mitochondrial inner membrane and translation products are cotranslationally integrated into the membrane. This is Large ribosomal subunit protein uL14m (mrpl38) from Neurospora crassa (strain ATCC 24698 / 74-OR23-1A / CBS 708.71 / DSM 1257 / FGSC 987).